The following is a 235-amino-acid chain: Phosphoribosylaminoimidazole-succinocarboxamide synthase (235 aa).

The protein belongs to the SAICAR synthetase family.

The catalysed reaction is 5-amino-1-(5-phospho-D-ribosyl)imidazole-4-carboxylate + L-aspartate + ATP = (2S)-2-[5-amino-1-(5-phospho-beta-D-ribosyl)imidazole-4-carboxamido]succinate + ADP + phosphate + 2 H(+). It participates in purine metabolism; IMP biosynthesis via de novo pathway; 5-amino-1-(5-phospho-D-ribosyl)imidazole-4-carboxamide from 5-amino-1-(5-phospho-D-ribosyl)imidazole-4-carboxylate: step 1/2. This is Phosphoribosylaminoimidazole-succinocarboxamide synthase from Clostridium beijerinckii (strain ATCC 51743 / NCIMB 8052) (Clostridium acetobutylicum).